Reading from the N-terminus, the 937-residue chain is Periplasmic nitrate reductase (937 aa).

A signal peptide (tat-type signal) is located at residues 1 to 42 (MTSKIQGKKPTLSRRDFIKSAAAASAAASVGLSIPSVMSAEA). The 62-residue stretch at 49–110 (WKWDKSVCRF…FCAKIMYGAD (62 aa)) folds into the 4Fe-4S Mo/W bis-MGD-type domain. The [4Fe-4S] cluster site is built by C56, C59, C63, and C96. Residues K98, Q166, N191, C195, 228–235 (WGANMAEM), M433, Q437, N543, 568–569 (SE), K591, D618, and 827–836 (TGRVLEHWHS) each bind Mo-bis(molybdopterin guanine dinucleotide). W903 is a substrate binding site. Mo-bis(molybdopterin guanine dinucleotide)-binding residues include N911 and K928.

It belongs to the prokaryotic molybdopterin-containing oxidoreductase family. NasA/NapA/NarB subfamily. As to quaternary structure, component of the periplasmic nitrate reductase NapAB complex composed of NapA and NapB. Requires [4Fe-4S] cluster as cofactor. Mo-bis(molybdopterin guanine dinucleotide) serves as cofactor. In terms of processing, predicted to be exported by the Tat system. The position of the signal peptide cleavage has not been experimentally proven.

The protein localises to the periplasm. The catalysed reaction is 2 Fe(II)-[cytochrome] + nitrate + 2 H(+) = 2 Fe(III)-[cytochrome] + nitrite + H2O. Its function is as follows. Catalytic subunit of the periplasmic nitrate reductase complex NapAB. Receives electrons from NapB and catalyzes the reduction of nitrate to nitrite. This Helicobacter hepaticus (strain ATCC 51449 / 3B1) protein is Periplasmic nitrate reductase.